Consider the following 416-residue polypeptide: Secreted RxLR effector protein 25 (416 aa).

The first 20 residues, 1-20, serve as a signal peptide directing secretion; sequence MRSWLLLLVGLSSYFALSTS. The RxLR-dEER motif lies at 49 to 88; the sequence is RKLRAPGGDTNTLKDSGKARREKKVWKLFCRVFLQLDDEK.

This sequence belongs to the RxLR effector family.

It localises to the secreted. The protein localises to the host cytoplasm. The protein resides in the host nucleus. Effector that partially suppresses the tobacco programmed cell death induced by cell death-inducing proteins. The chain is Secreted RxLR effector protein 25 from Plasmopara viticola (Downy mildew of grapevine).